A 354-amino-acid polypeptide reads, in one-letter code: 4-hydroxy-3-methylbut-2-en-1-yl diphosphate synthase (flavodoxin) (354 aa).

Residues cysteine 265, cysteine 268, cysteine 300, and glutamate 307 each coordinate [4Fe-4S] cluster.

It belongs to the IspG family. [4Fe-4S] cluster is required as a cofactor.

The enzyme catalyses (2E)-4-hydroxy-3-methylbut-2-enyl diphosphate + oxidized [flavodoxin] + H2O + 2 H(+) = 2-C-methyl-D-erythritol 2,4-cyclic diphosphate + reduced [flavodoxin]. It participates in isoprenoid biosynthesis; isopentenyl diphosphate biosynthesis via DXP pathway; isopentenyl diphosphate from 1-deoxy-D-xylulose 5-phosphate: step 5/6. Its function is as follows. Converts 2C-methyl-D-erythritol 2,4-cyclodiphosphate (ME-2,4cPP) into 1-hydroxy-2-methyl-2-(E)-butenyl 4-diphosphate. In Hydrogenobaculum sp. (strain Y04AAS1), this protein is 4-hydroxy-3-methylbut-2-en-1-yl diphosphate synthase (flavodoxin).